A 1097-amino-acid chain; its full sequence is MSSSALQIAKTATYLPDLVEVQRASFKWFLEKGLIEELKSFSPITDYTGKLELHFIGEEYRLKRPRHDVEEAKRRDATFASQMYVTCRLINKETGEIKEQEVFIGELPLMTERGTFIINGAERVIVNQIVRSPGVYFKDEMDKNGRRTYNASVIPNRGAWLKFETDKNNLLYVRVDKTRKINAHVLMRAMGLSDNDVVDKLRHPEFYKQSIDAANDEGINSEDQALLELYKKLRPGEPPSVSGGQQLLHSRFFDPKRYDLGRVGRYKINKKLRLTVPDNVRTLTHEDVLSTIDYLINLELDIGGASLDDIDHLGNRRVRSVGELLQNQVRVGLNRLERIIKERMTVGETDSLTPAQLVNPKPLVAAIKEFFGSSQLSQFMDQTNPLAELTHKRRISALGPGGLTRERAGFAVRDIHPSHYGRLCPIETPEGPNAGLINSLATHARVNEYGFIETPFWEVEKGRVIKEGKPVYLSADLEDECRVAPGDVATDKSGNILANLIPVRYRQDFEKVPPHQVDYVQLSPVQVISVATSLIPFLEHDDANRALMGSNMQRQAVPLLRPERPLVGTGLESQVARDSGMVPITKVNGIVSYVDANEIVVKDVDGNEHVHYLQKYQRSNQDTCLNQRPIVKNGDQVISGQVLADGSACEGGEIALGQNVLIAYMPWEGYNYEDAILVSERMVTDDLYTSVHIEKYEIEARQTKLGPEEITREIPNISEESLNNLDEMGIIRTGAFVESGDILVGKVTPKGESDQPPEEKLLRAIFGEKARDVRDNSLRVPKTEKGRVLDVRIYTREQGDELPPGANMVVRVYVAQRRKIQVGDKMAGRHGNKGIISRILPREDMPYLPDGTPVDIVLNPLGVPSRMNVGQVFELLMGWAASNLNCRVKVVPFDEMYGAEKSHQTVQAFLKEASKQNGKDWVYNPEDPGKLLLKDGRTGEPFDQPVAVGYSHFLKLVHLVDDKIHARSTGPYSLVTQQPLGGKAQQGGQRLGEMEVWALEAYGAAYTLQELLTVKSDDMQGRNEALNAIVKGKPIPRPGTPESFKVLMRELQSLGLDIGVYTDEGKEVDLMQDVNPRRNTPSRPTYESLGTSEYEED.

A disordered region spans residues 1070–1097 (LMQDVNPRRNTPSRPTYESLGTSEYEED). Over residues 1077-1091 (RRNTPSRPTYESLGT) the composition is skewed to polar residues.

Belongs to the RNA polymerase beta chain family. As to quaternary structure, in cyanobacteria the RNAP catalytic core is composed of 2 alpha, 1 beta, 1 beta', 1 gamma and 1 omega subunit. When a sigma factor is associated with the core the holoenzyme is formed, which can initiate transcription.

It catalyses the reaction RNA(n) + a ribonucleoside 5'-triphosphate = RNA(n+1) + diphosphate. Functionally, DNA-dependent RNA polymerase catalyzes the transcription of DNA into RNA using the four ribonucleoside triphosphates as substrates. This chain is DNA-directed RNA polymerase subunit beta, found in Prochlorococcus marinus (strain MIT 9515).